Here is a 60-residue protein sequence, read N- to C-terminus: Putative insect toxin Acra6 (60 aa).

The LCN-type CS-alpha/beta domain maps to 2–60; that stretch reads RDGYIRRKDEFKFKCYVDGKDCDDVCKSEGGSAGYCTALGFLCYCAGLPDDKAWKPTSS. 3 disulfides stabilise this stretch: cysteine 16/cysteine 37, cysteine 23/cysteine 44, and cysteine 27/cysteine 46.

This sequence belongs to the long (4 C-C) scorpion toxin superfamily. Sodium channel inhibitor family. Beta subfamily. Expressed by the venom gland.

Its subcellular location is the secreted. In terms of biological role, depressant insect toxins cause a transient contraction paralysis followed by a slow flaccid paralysis. They bind voltage-independently to sodium channels (Nav) and block action potentials, primarily by depolarizing the axonal membrane and suppressing the sodium current. This is Putative insect toxin Acra6 from Androctonus crassicauda (Arabian fat-tailed scorpion).